The chain runs to 227 residues: ATP synthase F(0) complex subunit a (227 aa).

Helical transmembrane passes span 14–34 (LLGIPLIAMAIMIPWLIFPTP), 69–89 (WATILTALMLFLITINLLGLL), 99–119 (LSLNMAFAIPLWLTTVLIGML), 137–157 (LLIPILIIIETISLFIRPLAL), 180–200 (FVLITIMPTVALLTSLILFLL), and 202–222 (ILEVAVAMIQAYVFVLLLSLY).

It belongs to the ATPase A chain family. Component of the ATP synthase complex composed at least of ATP5F1A/subunit alpha, ATP5F1B/subunit beta, ATP5MC1/subunit c (homooctomer), MT-ATP6/subunit a, MT-ATP8/subunit 8, ATP5ME/subunit e, ATP5MF/subunit f, ATP5MG/subunit g, ATP5MK/subunit k, ATP5MJ/subunit j, ATP5F1C/subunit gamma, ATP5F1D/subunit delta, ATP5F1E/subunit epsilon, ATP5PF/subunit F6, ATP5PB/subunit b, ATP5PD/subunit d, ATP5PO/subunit OSCP. ATP synthase complex consists of a soluble F(1) head domain (subunits alpha(3) and beta(3)) - the catalytic core - and a membrane F(0) domain - the membrane proton channel (subunits c, a, 8, e, f, g, k and j). These two domains are linked by a central stalk (subunits gamma, delta, and epsilon) rotating inside the F1 region and a stationary peripheral stalk (subunits F6, b, d, and OSCP). Interacts with DNAJC30; interaction is direct.

Its subcellular location is the mitochondrion inner membrane. The catalysed reaction is H(+)(in) = H(+)(out). Its function is as follows. Subunit a, of the mitochondrial membrane ATP synthase complex (F(1)F(0) ATP synthase or Complex V) that produces ATP from ADP in the presence of a proton gradient across the membrane which is generated by electron transport complexes of the respiratory chain. ATP synthase complex consist of a soluble F(1) head domain - the catalytic core - and a membrane F(1) domain - the membrane proton channel. These two domains are linked by a central stalk rotating inside the F(1) region and a stationary peripheral stalk. During catalysis, ATP synthesis in the catalytic domain of F(1) is coupled via a rotary mechanism of the central stalk subunits to proton translocation. With the subunit c (ATP5MC1), forms the proton-conducting channel in the F(0) domain, that contains two crucial half-channels (inlet and outlet) that facilitate proton movement from the mitochondrial intermembrane space (IMS) into the matrix. Protons are taken up via the inlet half-channel and released through the outlet half-channel, following a Grotthuss mechanism. The protein is ATP synthase F(0) complex subunit a of Squalus acanthias (Spiny dogfish).